Here is a 561-residue protein sequence, read N- to C-terminus: DNA ligase B (561 aa).

The active-site N6-AMP-lysine intermediate is the Lys-125.

The protein belongs to the NAD-dependent DNA ligase family. LigB subfamily.

The enzyme catalyses NAD(+) + (deoxyribonucleotide)n-3'-hydroxyl + 5'-phospho-(deoxyribonucleotide)m = (deoxyribonucleotide)n+m + AMP + beta-nicotinamide D-nucleotide.. In terms of biological role, catalyzes the formation of phosphodiester linkages between 5'-phosphoryl and 3'-hydroxyl groups in double-stranded DNA using NAD as a coenzyme and as the energy source for the reaction. This is DNA ligase B from Salmonella enteritidis PT4 (strain P125109).